The primary structure comprises 620 residues: Chaperone protein DnaK (620 aa).

Threonine 197 bears the Phosphothreonine; by autocatalysis mark. The interval 597 to 620 is disordered; that stretch reads AMANKNNAEQPKKKDDDVIDAEVE.

This sequence belongs to the heat shock protein 70 family.

Acts as a chaperone. The sequence is that of Chaperone protein DnaK from Helicobacter pylori (strain Shi470).